Reading from the N-terminus, the 160-residue chain is Cytochrome b6-f complex subunit 4 (160 aa).

Transmembrane regions (helical) follow at residues 36–56, 95–115, and 131–151; these read LLYI…GLAV, LLGI…PFIE, and VVFL…CLPI.

The protein belongs to the cytochrome b family. PetD subfamily. The 4 large subunits of the cytochrome b6-f complex are cytochrome b6, subunit IV (17 kDa polypeptide, PetD), cytochrome f and the Rieske protein, while the 4 small subunits are PetG, PetL, PetM and PetN. The complex functions as a dimer.

The protein localises to the cellular thylakoid membrane. In terms of biological role, component of the cytochrome b6-f complex, which mediates electron transfer between photosystem II (PSII) and photosystem I (PSI), cyclic electron flow around PSI, and state transitions. The sequence is that of Cytochrome b6-f complex subunit 4 from Prochlorococcus marinus (strain MIT 9515).